Reading from the N-terminus, the 306-residue chain is Epoxyqueuosine reductase (306 aa).

The active-site Proton donor is aspartate 131. The 4Fe-4S ferredoxin-type domain maps to 173–205; it reads LDLTYDHPVTDHCGTCTACIDACPTQAIVQPYV. [4Fe-4S] cluster is bound by residues cysteine 185, cysteine 188, cysteine 191, cysteine 195, cysteine 211, cysteine 238, cysteine 241, and cysteine 245.

This sequence belongs to the QueG family. In terms of assembly, monomer. Cob(II)alamin serves as cofactor. Requires [4Fe-4S] cluster as cofactor.

The protein localises to the cytoplasm. It catalyses the reaction epoxyqueuosine(34) in tRNA + AH2 = queuosine(34) in tRNA + A + H2O. It functions in the pathway tRNA modification; tRNA-queuosine biosynthesis. Catalyzes the conversion of epoxyqueuosine (oQ) to queuosine (Q), which is a hypermodified base found in the wobble positions of tRNA(Asp), tRNA(Asn), tRNA(His) and tRNA(Tyr). The polypeptide is Epoxyqueuosine reductase (Cellulophaga algicola (strain DSM 14237 / IC166 / ACAM 630)).